A 495-amino-acid chain; its full sequence is UDP-N-acetylmuramoyl-L-alanyl-D-glutamate--2,6-diaminopimelate ligase (495 aa).

UDP-N-acetyl-alpha-D-muramoyl-L-alanyl-D-glutamate-binding positions include L27, S29, and 44–46 (HQA). Position 116 to 122 (116 to 122 (GTNGKTT)) interacts with ATP. UDP-N-acetyl-alpha-D-muramoyl-L-alanyl-D-glutamate is bound by residues N157, 158–159 (TT), S185, Q191, and R193. At K225 the chain carries N6-carboxylysine. Meso-2,6-diaminopimelate contacts are provided by residues R390, 414 to 417 (DNPR), G465, and E469. The Meso-diaminopimelate recognition motif motif lies at 414-417 (DNPR).

Belongs to the MurCDEF family. MurE subfamily. The cofactor is Mg(2+). Carboxylation is probably crucial for Mg(2+) binding and, consequently, for the gamma-phosphate positioning of ATP.

Its subcellular location is the cytoplasm. The enzyme catalyses UDP-N-acetyl-alpha-D-muramoyl-L-alanyl-D-glutamate + meso-2,6-diaminopimelate + ATP = UDP-N-acetyl-alpha-D-muramoyl-L-alanyl-gamma-D-glutamyl-meso-2,6-diaminopimelate + ADP + phosphate + H(+). It functions in the pathway cell wall biogenesis; peptidoglycan biosynthesis. Functionally, catalyzes the addition of meso-diaminopimelic acid to the nucleotide precursor UDP-N-acetylmuramoyl-L-alanyl-D-glutamate (UMAG) in the biosynthesis of bacterial cell-wall peptidoglycan. The chain is UDP-N-acetylmuramoyl-L-alanyl-D-glutamate--2,6-diaminopimelate ligase from Salmonella typhimurium (strain LT2 / SGSC1412 / ATCC 700720).